The chain runs to 354 residues: DNA polymerase IV (354 aa).

Residues 6–187 form the UmuC domain; that stretch reads IIHVDCDCFY…LPVARLHGVG (182 aa). Mg(2+) contacts are provided by Asp10 and Asp105. Glu106 is a catalytic residue.

This sequence belongs to the DNA polymerase type-Y family. As to quaternary structure, monomer. Requires Mg(2+) as cofactor.

The protein resides in the cytoplasm. The catalysed reaction is DNA(n) + a 2'-deoxyribonucleoside 5'-triphosphate = DNA(n+1) + diphosphate. Functionally, poorly processive, error-prone DNA polymerase involved in untargeted mutagenesis. Copies undamaged DNA at stalled replication forks, which arise in vivo from mismatched or misaligned primer ends. These misaligned primers can be extended by PolIV. Exhibits no 3'-5' exonuclease (proofreading) activity. May be involved in translesional synthesis, in conjunction with the beta clamp from PolIII. In Pseudomonas putida (strain ATCC 47054 / DSM 6125 / CFBP 8728 / NCIMB 11950 / KT2440), this protein is DNA polymerase IV.